The chain runs to 412 residues: Serine--tRNA ligase (412 aa).

An L-serine-binding site is contributed by 228 to 230 (TAE). ATP is bound at residue 259–261 (RKE). An L-serine-binding site is contributed by glutamate 282. 346-349 (EISS) serves as a coordination point for ATP. Serine 380 contributes to the L-serine binding site.

This sequence belongs to the class-II aminoacyl-tRNA synthetase family. Type-1 seryl-tRNA synthetase subfamily. As to quaternary structure, homodimer. The tRNA molecule binds across the dimer.

It is found in the cytoplasm. The catalysed reaction is tRNA(Ser) + L-serine + ATP = L-seryl-tRNA(Ser) + AMP + diphosphate + H(+). The enzyme catalyses tRNA(Sec) + L-serine + ATP = L-seryl-tRNA(Sec) + AMP + diphosphate + H(+). It participates in aminoacyl-tRNA biosynthesis; selenocysteinyl-tRNA(Sec) biosynthesis; L-seryl-tRNA(Sec) from L-serine and tRNA(Sec): step 1/1. Catalyzes the attachment of serine to tRNA(Ser). Is also able to aminoacylate tRNA(Sec) with serine, to form the misacylated tRNA L-seryl-tRNA(Sec), which will be further converted into selenocysteinyl-tRNA(Sec). This chain is Serine--tRNA ligase, found in Aliarcobacter butzleri (strain RM4018) (Arcobacter butzleri).